Consider the following 739-residue polypeptide: Probable beta-glucosidase L (739 aa).

An N-terminal signal peptide occupies residues 1–17; sequence MQTLFLSLLAAAVTVHA. 2 N-linked (GlcNAc...) asparagine glycosylation sites follow: Asn-40 and Asn-224. The active site involves Asp-252. N-linked (GlcNAc...) asparagine glycosylation occurs at Asn-398.

This sequence belongs to the glycosyl hydrolase 3 family.

Its subcellular location is the secreted. The enzyme catalyses Hydrolysis of terminal, non-reducing beta-D-glucosyl residues with release of beta-D-glucose.. It functions in the pathway glycan metabolism; cellulose degradation. Functionally, beta-glucosidases are one of a number of cellulolytic enzymes involved in the degradation of cellulosic biomass. Catalyzes the last step releasing glucose from the inhibitory cellobiose. In Aspergillus fumigatus (strain ATCC MYA-4609 / CBS 101355 / FGSC A1100 / Af293) (Neosartorya fumigata), this protein is Probable beta-glucosidase L (bglL).